A 437-amino-acid chain; its full sequence is GTPase Der (437 aa).

EngA-type G domains follow at residues 3–167 and 176–352; these read NLVA…KKES and PRFA…ENRM. GTP contacts are provided by residues 9 to 16, 56 to 60, 119 to 122, 182 to 189, 229 to 233, and 294 to 297; these read GRPNVGKS, DTGGW, NKTD, GRPNAGKS, DTAGI, and NKWD. Residues 353 to 437 enclose the KH-like domain; sequence IKIPTARLNE…TPINIYIRQK (85 aa).

This sequence belongs to the TRAFAC class TrmE-Era-EngA-EngB-Septin-like GTPase superfamily. EngA (Der) GTPase family. In terms of assembly, associates with the 50S ribosomal subunit.

GTPase that plays an essential role in the late steps of ribosome biogenesis. The sequence is that of GTPase Der from Bacteroides fragilis (strain ATCC 25285 / DSM 2151 / CCUG 4856 / JCM 11019 / LMG 10263 / NCTC 9343 / Onslow / VPI 2553 / EN-2).